Consider the following 89-residue polypeptide: Exodeoxyribonuclease 7 small subunit (89 aa).

Belongs to the XseB family. In terms of assembly, heterooligomer composed of large and small subunits.

The protein resides in the cytoplasm. The enzyme catalyses Exonucleolytic cleavage in either 5'- to 3'- or 3'- to 5'-direction to yield nucleoside 5'-phosphates.. Its function is as follows. Bidirectionally degrades single-stranded DNA into large acid-insoluble oligonucleotides, which are then degraded further into small acid-soluble oligonucleotides. This is Exodeoxyribonuclease 7 small subunit from Chlorobium phaeobacteroides (strain DSM 266 / SMG 266 / 2430).